Here is a 328-residue protein sequence, read N- to C-terminus: Protein chibby homolog 2 (328 aa).

The interval 180-231 (NKGASSVQKDTENTTAAGEGSLGPTCQEEHDAKEESTTPTQNDTKIAPSTED) is disordered. The segment covering 182-195 (GASSVQKDTENTTA) has biased composition (polar residues). Residues 206–215 (QEEHDAKEES) are compositionally biased toward basic and acidic residues. Positions 259–307 (RESLHALQDESKFFQEEYKKLKLQLNNVKNTVSDITTQMEMLEKELIAI) form a coiled coil.

This sequence belongs to the chibby family. SPERT subfamily.

The chain is Protein chibby homolog 2 (CBY2) from Gallus gallus (Chicken).